A 1297-amino-acid chain; its full sequence is MTVKTFRGSPALSEFRLTQLQQKCQQYQLPITSVYAEYLHFVEQKTSLVEDEIVKLQALLHYGSMFSELKPAGYCLIVTPRVGTISSWSSKATDIAHNCGLSKVNRIERGIAYYFNIERDLTEAELATLKDLLHDRMLETVLNHETEAALLFTQQEPKALTTIDILNGGRQALERANIALGLALADDEMDYLVESFTALKRNPQDVELYMFAQANSEHCRHKIFNADWIIDGKKQDKSLFKMIKNTFEQTPDFVLSAYKDNAAVMEGSKVGRWFPDPDGQYRVHQEDAHILMKVETHNHPTAISPFPGAATGSGGEIRDEGATGRGAKPKAGLTGFSVSNLVIPNFEQPWENPLSKPNRIASALDIMIDAPLGSAAFNNEFGRPALLGYFRTYEEKVNSFAGKEVRGYHKPIMLAGGIGNIRGEQVQKGEIPIGAKLIVLGGAAMNIGLGGGAASSMDSGKSKEDLDFASVQRENPEMERRCQEVIDRCWQLGEENPILFIHDVGAGGLSNAMPELVHDGRRGGKFDLRSILCDEKGMSPLEIWCNESQERYVLAVAPENLELFTALCERERAPFAVIGEATQAEHLILHDSHFDNNPIDLPMNVLLGKTPKMTREVLSKTVENQSLKTEGIQLKEAFHRVLRLPVVAEKTFLITIGDRSVTGMVARDQMVGPWQIPVSDVAVTTASLDSYHGEAMAMGERSPVALLNFSASARLAVAEAITNIAGTHIGEMKRIKLSANWMSAAGHTGEDAGLYEAVKAVGEELCPALGLTIPVGKDSMSMKTTWIDNGEQKSVTAPLSLVISAFARVEDVRKTLTPQLRTDKGLSSLLLIDLGEGHNRLGATALAQVYKQLGDKPADVVKVQRLKDFYNAMQTLVAEDKLLAYHDRSDGGLITTLAEMAFAGHCGVEVDISALGDNDLAVLFNEELGAVIQVADSQLESVREVLKAHNLLGITHQLGTVTADDRFEISRGSHKLFSEKRSELRSIWAELTYQMQRLRDNPECAEQEFEAKKNPDDKGLSAFLTYDVNEDITAPFINKGVKPTIAILREQGVNSHYEMAAAFDRAGFNAIDVHMSDLMIGRRNLAEFNAMVACGGFSYGDVLGAGGGWAKSILFNPKLHEQFSQFFINPNTLTLGVCNGCQMISNLAEIIPGTENWPHFVRNKSERFEARVSLVKINEVDSVWFAGMAGSHMPIAVSHGEGQVKFKSVEQFAGLKAQGIIAAQYIDNNGSPTELYPANPNGSAEGITAITNLDGRVAIMMPHPERVFRAVSNSWHPENWTEDGAWMRLFRNARMVF.

Positions 303–329 (ISPFPGAATGSGGEIRDEGATGRGAKP) are disordered. ATP is bound at residue 308–319 (GAATGSGGEIRD). The Mg(2+) site is built by Asp-680, Glu-719, Asn-723, and Asp-887. Ser-889 is an ATP binding site. Residues 1045-1297 (IAILREQGVN…RLFRNARMVF (253 aa)) form the Glutamine amidotransferase type-1 domain. The Nucleophile role is filled by Cys-1138. Catalysis depends on residues His-1263 and Glu-1265.

It in the N-terminal section; belongs to the FGAMS family. As to quaternary structure, monomer.

Its subcellular location is the cytoplasm. It carries out the reaction N(2)-formyl-N(1)-(5-phospho-beta-D-ribosyl)glycinamide + L-glutamine + ATP + H2O = 2-formamido-N(1)-(5-O-phospho-beta-D-ribosyl)acetamidine + L-glutamate + ADP + phosphate + H(+). It participates in purine metabolism; IMP biosynthesis via de novo pathway; 5-amino-1-(5-phospho-D-ribosyl)imidazole from N(2)-formyl-N(1)-(5-phospho-D-ribosyl)glycinamide: step 1/2. Functionally, phosphoribosylformylglycinamidine synthase involved in the purines biosynthetic pathway. Catalyzes the ATP-dependent conversion of formylglycinamide ribonucleotide (FGAR) and glutamine to yield formylglycinamidine ribonucleotide (FGAM) and glutamate. The sequence is that of Phosphoribosylformylglycinamidine synthase from Haemophilus influenzae (strain 86-028NP).